We begin with the raw amino-acid sequence, 211 residues long: Probable nicotinate-nucleotide adenylyltransferase (211 aa).

The protein belongs to the NadD family.

The enzyme catalyses nicotinate beta-D-ribonucleotide + ATP + H(+) = deamido-NAD(+) + diphosphate. It functions in the pathway cofactor biosynthesis; NAD(+) biosynthesis; deamido-NAD(+) from nicotinate D-ribonucleotide: step 1/1. Its function is as follows. Catalyzes the reversible adenylation of nicotinate mononucleotide (NaMN) to nicotinic acid adenine dinucleotide (NaAD). The sequence is that of Probable nicotinate-nucleotide adenylyltransferase from Corynebacterium kroppenstedtii (strain DSM 44385 / JCM 11950 / CIP 105744 / CCUG 35717).